The sequence spans 286 residues: Nucleotide-binding protein APL_0334 (286 aa).

8–15 (GRSGSGKS) is a binding site for ATP. 56 to 59 (DIRN) serves as a coordination point for GTP.

Belongs to the RapZ-like family.

Functionally, displays ATPase and GTPase activities. The sequence is that of Nucleotide-binding protein APL_0334 from Actinobacillus pleuropneumoniae serotype 5b (strain L20).